We begin with the raw amino-acid sequence, 257 residues long: Putative carboxymethylenebutenolidase (257 aa).

Residues C148, D195, and H226 contribute to the active site.

The protein belongs to the dienelactone hydrolase family.

It carries out the reaction 2-(5-oxo-2,5-dihydrofuran-2-ylidene)acetate + H2O = 4-oxohex-2-enedioate + H(+). In Saccharolobus solfataricus (strain ATCC 35092 / DSM 1617 / JCM 11322 / P2) (Sulfolobus solfataricus), this protein is Putative carboxymethylenebutenolidase.